Consider the following 376-residue polypeptide: Chaperone protein DnaJ (376 aa).

The J domain occupies 5 to 70 (DYYEILGVSK…QKRAAYDQYG (66 aa)). The segment at 131-209 (GVTKEIRIPT…CHGHGRVERS (79 aa)) adopts a CR-type zinc-finger fold. Positions 144, 147, 161, 164, 183, 186, 197, and 200 each coordinate Zn(2+). 4 CXXCXGXG motif repeats span residues 144-151 (CDVCHGSG), 161-168 (CPTCHGSG), 183-190 (CPHCQGRG), and 197-204 (CNKCHGHG).

The protein belongs to the DnaJ family. Homodimer. Zn(2+) serves as cofactor.

It is found in the cytoplasm. Functionally, participates actively in the response to hyperosmotic and heat shock by preventing the aggregation of stress-denatured proteins and by disaggregating proteins, also in an autonomous, DnaK-independent fashion. Unfolded proteins bind initially to DnaJ; upon interaction with the DnaJ-bound protein, DnaK hydrolyzes its bound ATP, resulting in the formation of a stable complex. GrpE releases ADP from DnaK; ATP binding to DnaK triggers the release of the substrate protein, thus completing the reaction cycle. Several rounds of ATP-dependent interactions between DnaJ, DnaK and GrpE are required for fully efficient folding. Also involved, together with DnaK and GrpE, in the DNA replication of plasmids through activation of initiation proteins. The protein is Chaperone protein DnaJ of Escherichia coli (strain K12 / MC4100 / BW2952).